We begin with the raw amino-acid sequence, 367 residues long: Probable butyrate kinase (367 aa).

The protein belongs to the acetokinase family.

Its subcellular location is the cytoplasm. The catalysed reaction is butanoate + ATP = butanoyl phosphate + ADP. The protein is Probable butyrate kinase of Bacillus cereus (strain ATCC 14579 / DSM 31 / CCUG 7414 / JCM 2152 / NBRC 15305 / NCIMB 9373 / NCTC 2599 / NRRL B-3711).